Here is an 81-residue protein sequence, read N- to C-terminus: Sulfur carrier protein TusA (81 aa).

Cysteine 19 serves as the catalytic Cysteine persulfide intermediate.

Belongs to the sulfur carrier protein TusA family.

It localises to the cytoplasm. Sulfur carrier protein which probably makes part of a sulfur-relay system. This chain is Sulfur carrier protein TusA, found in Shewanella putrefaciens (strain CN-32 / ATCC BAA-453).